A 134-amino-acid polypeptide reads, in one-letter code: NADH-quinone oxidoreductase subunit A (134 aa).

The next 3 helical transmembrane spans lie at 12–32 (FAIY…LAAL), 64–84 (FYLV…LFAW), and 93–113 (WVGF…LLYL).

It belongs to the complex I subunit 3 family. NDH-1 is composed of 14 different subunits. Subunits NuoA, H, J, K, L, M, N constitute the membrane sector of the complex.

The protein resides in the cell inner membrane. It catalyses the reaction a quinone + NADH + 5 H(+)(in) = a quinol + NAD(+) + 4 H(+)(out). In terms of biological role, NDH-1 shuttles electrons from NADH, via FMN and iron-sulfur (Fe-S) centers, to quinones in the respiratory chain. The immediate electron acceptor for the enzyme in this species is believed to be ubiquinone. Couples the redox reaction to proton translocation (for every two electrons transferred, four hydrogen ions are translocated across the cytoplasmic membrane), and thus conserves the redox energy in a proton gradient. In Aeromonas salmonicida (strain A449), this protein is NADH-quinone oxidoreductase subunit A.